Here is a 206-residue protein sequence, read N- to C-terminus: MIDFDGYRPNVGIVICNKAGQVLWAKRFGQNSWQFPQGGINEGENIETAMYRELYEEVGLTKKDVRLLWASKYWLKYKLPKRLVRSDGSQPVCIGQKQRWFLLQLLSDENLIDLKTTKSPEFDGWRWVSFWYPVRQVVSFKRDVYRKVMKEFAGVLLNESKKPETVEKPRVERTEKRDFQKRDNQKREFRKSARMWNNSHQKGKAQ.

Residues 6–150 (GYRPNVGIVI…KRDVYRKVMK (145 aa)) form the Nudix hydrolase domain. Positions 38 to 59 (GGINEGENIETAMYRELYEEVG) match the Nudix box motif. Basic and acidic residues predominate over residues 162–191 (KPETVEKPRVERTEKRDFQKRDNQKREFRK). Residues 162–206 (KPETVEKPRVERTEKRDFQKRDNQKREFRKSARMWNNSHQKGKAQ) are disordered.

It belongs to the Nudix hydrolase family. RppH subfamily. The cofactor is a divalent metal cation.

In terms of biological role, accelerates the degradation of transcripts by removing pyrophosphate from the 5'-end of triphosphorylated RNA, leading to a more labile monophosphorylated state that can stimulate subsequent ribonuclease cleavage. The sequence is that of RNA pyrophosphohydrolase from Actinobacillus pleuropneumoniae serotype 7 (strain AP76).